A 345-amino-acid polypeptide reads, in one-letter code: PI-PLC X domain-containing protein 1 (345 aa).

In terms of domain architecture, PI-PLC X-box spans glutamine 52–alanine 228.

Expressed at highest levels in brain and kidney. Also detected in stomach, thymus and skeletal muscle.

The protein localises to the cytoplasm. In Mus musculus (Mouse), this protein is PI-PLC X domain-containing protein 1 (Plcxd1).